A 451-amino-acid chain; its full sequence is tRNA(Ile)-lysidine synthase (451 aa).

ATP is bound at residue 21 to 26; that stretch reads SGGLDS.

Belongs to the tRNA(Ile)-lysidine synthase family.

It localises to the cytoplasm. It catalyses the reaction cytidine(34) in tRNA(Ile2) + L-lysine + ATP = lysidine(34) in tRNA(Ile2) + AMP + diphosphate + H(+). Its function is as follows. Ligates lysine onto the cytidine present at position 34 of the AUA codon-specific tRNA(Ile) that contains the anticodon CAU, in an ATP-dependent manner. Cytidine is converted to lysidine, thus changing the amino acid specificity of the tRNA from methionine to isoleucine. The chain is tRNA(Ile)-lysidine synthase from Yersinia pseudotuberculosis serotype O:1b (strain IP 31758).